The primary structure comprises 239 residues: Major prion protein (239 aa).

An N-terminal signal peptide occupies residues 1-15 (MLVLFVATWSDLGLC). The tract at residues 15 to 98 (CKKRPKPGGW…NQWNKPSKPK (84 aa)) is disordered. Positions 16-31 (KKRPKPGGWNTGGSRY) are interaction with ADGRG6. Residues 16–222 (KKRPKPGGWN…ESQAYYQRGS (207 aa)) are interaction with GRB2, ERI3 and SYN1. 5 consecutive repeat copies span residues 44-51 (PQSGGWGQ), 52-59 (PHGGGWGQ), 60-67 (PHGGGWGQ), 68-75 (PHGGGWGQ), and 76-83 (PHGGGWGQ). A 5 X 8 AA tandem repeats of P-H-G-G-G-W-G-Q region spans residues 44–83 (PQSGGWGQPHGGGWGQPHGGGWGQPHGGGWGQPHGGGWGQ). The segment covering 47-87 (GGWGQPHGGGWGQPHGGGWGQPHGGGWGQPHGGGWGQGGGT) has biased composition (gly residues). The Cu(2+) site is built by histidine 53, glycine 54, glycine 55, histidine 61, glycine 62, glycine 63, histidine 69, glycine 70, glycine 71, histidine 77, glycine 78, and glycine 79. Residues cysteine 171 and cysteine 206 are joined by a disulfide bond. Residues asparagine 173 and asparagine 189 are each glycosylated (N-linked (GlcNAc...) asparagine). Serine 222 carries the GPI-anchor amidated serine lipid modification. A propeptide spans 223 to 239 (SMVLFSSPPVILLISFL) (removed in mature form).

Belongs to the prion family. In terms of assembly, monomer and homodimer. Has a tendency to aggregate into amyloid fibrils containing a cross-beta spine, formed by a steric zipper of superposed beta-strands. Soluble oligomers may represent an intermediate stage on the path to fibril formation. Copper binding may promote oligomerization. Interacts with GRB2, APP, ERI3/PRNPIP and SYN1. Mislocalized cytosolically exposed PrP interacts with MGRN1; this interaction alters MGRN1 subcellular location and causes lysosomal enlargement. Interacts with APP. Interacts with KIAA1191. Interacts with ADGRG6.

It is found in the cell membrane. Its subcellular location is the golgi apparatus. In terms of biological role, its primary physiological function is unclear. May play a role in neuronal development and synaptic plasticity. May be required for neuronal myelin sheath maintenance. May promote myelin homeostasis through acting as an agonist for ADGRG6 receptor. May play a role in iron uptake and iron homeostasis. Soluble oligomers are toxic to cultured neuroblastoma cells and induce apoptosis (in vitro). Association with GPC1 (via its heparan sulfate chains) targets PRNP to lipid rafts. Also provides Cu(2+) or Zn(2+) for the ascorbate-mediated GPC1 deaminase degradation of its heparan sulfate side chains. The chain is Major prion protein (PRNP) from Aotus trivirgatus (Three-striped night monkey).